The following is a 161-amino-acid chain: Nucleotide-binding protein Shew185_3601 (161 aa).

The protein belongs to the YajQ family.

Its function is as follows. Nucleotide-binding protein. In Shewanella baltica (strain OS185), this protein is Nucleotide-binding protein Shew185_3601.